Consider the following 421-residue polypeptide: Testin (421 aa).

The 108-residue stretch at 92–199 (MILTNPVAAK…GDVKLPRDMN (108 aa)) folds into the PET domain. 2 disordered regions span residues 133–164 (EKQP…PSKC) and 193–213 (KLPR…GGDR). A compositionally biased stretch (basic and acidic residues) spans 155 to 164 (PAHDQDPSKC). LIM zinc-binding domains lie at 234–297 (YSCY…CDSE), 299–359 (PRCA…NHAV), and 362–421 (QGCH…KMMS).

It belongs to the prickle / espinas / testin family. In terms of assembly, interacts via LIM domain 1 with ZYX. Interacts (via LIM domain 3) with ENAH and VASP. Interacts with ALKBH4, talin, actin, alpha-actinin, GRIP1 and PXN. Interacts (via LIM domain 2) with ACTL7A (via N-terminus). Heterodimer with ACTL7A; the heterodimer interacts with ENAH to form a heterotrimer.

The protein localises to the cytoplasm. The protein resides in the cell junction. It is found in the focal adhesion. In terms of biological role, scaffold protein that may play a role in cell adhesion, cell spreading and in the reorganization of the actin cytoskeleton. Plays a role in the regulation of cell proliferation. May act as a tumor suppressor. The protein is Testin (TES) of Ovis aries (Sheep).